We begin with the raw amino-acid sequence, 207 residues long: 2,3-bisphosphoglycerate-dependent phosphoglycerate mutase (207 aa).

Substrate is bound by residues 10-17 (RHGQSEWN), 23-24 (TG), Arg-62, 89-92 (ERDY), Lys-100, 116-117 (RR), and 160-161 (GN). His-11 serves as the catalytic Tele-phosphohistidine intermediate. Catalysis depends on Glu-89, which acts as the Proton donor/acceptor.

It belongs to the phosphoglycerate mutase family. BPG-dependent PGAM subfamily. As to quaternary structure, homodimer.

It carries out the reaction (2R)-2-phosphoglycerate = (2R)-3-phosphoglycerate. The protein operates within carbohydrate degradation; glycolysis; pyruvate from D-glyceraldehyde 3-phosphate: step 3/5. Catalyzes the interconversion of 2-phosphoglycerate and 3-phosphoglycerate. The protein is 2,3-bisphosphoglycerate-dependent phosphoglycerate mutase of Rhodopseudomonas palustris (strain BisB18).